The primary structure comprises 345 residues: Diacylglycerol O-acyltransferase 1 (345 aa).

The Cytoplasmic segment spans residues 1–49; that stretch reads MSEETSIPGIIASTPPISKDSRRNVSHWLQALAVFLHSVSLTLTASWYT. A helical membrane pass occupies residues 50–70; the sequence is VLWAFLPFWPFLIVYLIWLIY. Residues 71-113 lie on the Lumenal side of the membrane; the sequence is DDGFVTGKDRQKRWLRNAPPYRWFCHYFPIRLHKTTELDSEKN. Residues 114 to 134 traverse the membrane as a helical segment; sequence YIFGYHPHGIISLGAFGGFAS. Residues 135 to 141 lie on the Cytoplasmic side of the membrane; sequence EGADFSK. The chain crosses the membrane as a helical span at residues 142 to 162; the sequence is LFPGINVSVLTLNSNFYVPVY. Residues 163–216 are Lumenal-facing; sequence RDYLMALNINSVSKKSCVSILSRKPGDSVLIVIGGAQESLLSRPGQNNLVLKKR. A helical transmembrane segment spans residues 217–237; it reads FGFVKLAFLTGSSLVPCFAFG. Residues 238–345 lie on the Cytoplasmic side of the membrane; that stretch reads ESDIFEQVDN…NRISELKLSA (108 aa).

It belongs to the diacylglycerol acyltransferase family.

It localises to the lipid droplet. It is found in the endoplasmic reticulum membrane. It catalyses the reaction an acyl-CoA + a 1,2-diacyl-sn-glycerol = a triacyl-sn-glycerol + CoA. The catalysed reaction is a 2-acylglycerol + an acyl-CoA = a 1,2-diacyl-sn-glycerol + CoA. It participates in glycerolipid metabolism; triacylglycerol biosynthesis. In terms of biological role, catalyzes the terminal and only committed step in triacylglycerol (TAG) synthesis by using diacylglycerol (DAG) and fatty acyl-CoA as substrates. Required for storage lipid synthesis. Major DAG esterifying enzyme in stationary phase when TAG production is particularly active. Involved in lipid particle synthesis from the endoplasmic reticulum, promoting localized TAG production at discrete ER subdomains. In Schizosaccharomyces pombe (strain 972 / ATCC 24843) (Fission yeast), this protein is Diacylglycerol O-acyltransferase 1 (dga1).